The following is a 597-amino-acid chain: Arginine--tRNA ligase (597 aa).

A 'HIGH' region motif is present at residues 125-135 (PNTNKPLHLGH).

This sequence belongs to the class-I aminoacyl-tRNA synthetase family. As to quaternary structure, monomer.

It localises to the cytoplasm. The catalysed reaction is tRNA(Arg) + L-arginine + ATP = L-arginyl-tRNA(Arg) + AMP + diphosphate. In Bacteroides fragilis (strain YCH46), this protein is Arginine--tRNA ligase.